The sequence spans 871 residues: MEIRKKPNIPMCLVLDSSSRPFMTLLFTILLFLTGLASAVGAVGGSPTAGFKPADDILIDCGSKSSTKTPEGRVFKSDSETVQYIEAKDDIQVSAPPSDKLPSPIYLTAKIFREEAIYKFHLTRPGWHWVRLHFFAFPNDKFDLQQATFSVLTEKYVLLHNFKLSNDNNDSQATVQKEYLLNMTDAQFALRFKPMKGSAAFINGIELVSAPDELISDAGTSLFPVNGFSGLSDYAYQSVYRVNVGGPLITPQNDTLGRTWTPDKEYLKDENLAKDVKTNPTAIIYPPGVTPLIAPQTVYATGAEMADSQTIDPNFNVTWNFPSNPSFHYFIRLHFCDIISKSLNDLYFNVYINGKTAISGLDLSTVAGDLSAPYYKDIVVNSTLMTSELQVQIGPMGEDTGKKNAILNGVEVLKMSNSVNSLDGEFGVDGQRASMGKQGMVATAGFVMMFGAFVGLGAMVYKWKKRPQDWQKRNSFSSWLLPIHAGDSTFMTSKTGSHKSNLYNSALGLGRYFSLSELQEVTKNFDASEIIGVGGFGNVYIGTIDDGTQVAIKRGNPQSEQGITEFHTEIQMLSKLRHRHLVSLIGYCDENAEMILVYEYMSNGPFRDHLYGKNLSPLTWKQRLEICIGAARGLHYLHTGTAQGIIHRDVKSTNILLDEALVAKVADFGLSKDVAFGQNHVSTAVKGSFGYLDPEYFRRQQLTDKSDVYSFGVVLLEALCARPAINPQLPREQVNLAEWAMLWKQKGLLEKIIDPHLVGAVNPESMKKFAEAAEKCLADYGVDRPTMGDVLWNLEYALQLQEAFSQGKAEAEEVETPKPVAVPAAAPTSPAATTAAASERPVSQTEEKDDSTVDQHSGTTMFTQFASLNGR.

Positions Met1 to Ala39 are cleaved as a signal peptide. Topologically, residues Val40–Gly439 are extracellular. N-linked (GlcNAc...) asparagine glycans are attached at residues Asn169, Asn182, Asn253, Asn316, and Asn381. A helical membrane pass occupies residues Met440–Val460. Residues Tyr461–Arg871 are Cytoplasmic-facing. Residues Phe525–Ala797 enclose the Protein kinase domain. ATP-binding positions include Ile531 to Val539 and Lys553. Asp649 functions as the Proton acceptor in the catalytic mechanism. The interval Lys808–Arg871 is disordered. Low complexity predominate over residues Pro817–Glu839. A compositionally biased stretch (polar residues) spans Asp854 to Arg871.

The protein belongs to the protein kinase superfamily. Ser/Thr protein kinase family.

The protein resides in the membrane. This is Probable receptor-like protein kinase At2g21480 from Arabidopsis thaliana (Mouse-ear cress).